Consider the following 545-residue polypeptide: CTP synthase (545 aa).

The amidoligase domain stretch occupies residues 1–267 (MTKFIFVTGG…AEQVLNLLQM (267 aa)). S13 is a binding site for CTP. S13 contributes to the UTP binding site. ATP is bound by residues 14-19 (SIGKGI) and D71. Mg(2+)-binding residues include D71 and E141. CTP contacts are provided by residues 148-150 (DIE), 188-193 (KTKPTQ), and K224. UTP is bound by residues 188–193 (KTKPTQ) and K224. Positions 292 to 534 (EIAIVGKYVQ…IQAAIALSLS (243 aa)) constitute a Glutamine amidotransferase type-1 domain. Residue G354 participates in L-glutamine binding. The active-site Nucleophile; for glutamine hydrolysis is the C381. L-glutamine is bound by residues 382–385 (LGMQ), E405, and R462. Active-site residues include H507 and E509.

This sequence belongs to the CTP synthase family. Homotetramer.

It carries out the reaction UTP + L-glutamine + ATP + H2O = CTP + L-glutamate + ADP + phosphate + 2 H(+). It catalyses the reaction L-glutamine + H2O = L-glutamate + NH4(+). The catalysed reaction is UTP + NH4(+) + ATP = CTP + ADP + phosphate + 2 H(+). It participates in pyrimidine metabolism; CTP biosynthesis via de novo pathway; CTP from UDP: step 2/2. Its activity is regulated as follows. Allosterically activated by GTP, when glutamine is the substrate; GTP has no effect on the reaction when ammonia is the substrate. The allosteric effector GTP functions by stabilizing the protein conformation that binds the tetrahedral intermediate(s) formed during glutamine hydrolysis. Inhibited by the product CTP, via allosteric rather than competitive inhibition. In terms of biological role, catalyzes the ATP-dependent amination of UTP to CTP with either L-glutamine or ammonia as the source of nitrogen. Regulates intracellular CTP levels through interactions with the four ribonucleotide triphosphates. This chain is CTP synthase, found in Nostoc punctiforme (strain ATCC 29133 / PCC 73102).